The following is a 334-amino-acid chain: Forkhead box protein N2 (334 aa).

2 disordered regions span residues 1–52 (MGPV…SGTT) and 83–108 (SPLYDIEGDLSPSGCQTPEKLSASSK). A DNA-binding region (fork-head) is located at residues 108 to 204 (KPPYSFSLLI…QALKKQPFSS (97 aa)).

It is found in the nucleus. This is Forkhead box protein N2 from Xenopus tropicalis (Western clawed frog).